The following is a 200-amino-acid chain: Methylthioribulose-1-phosphate dehydratase (200 aa).

Residues H90 and H92 each contribute to the Zn(2+) site.

The protein belongs to the aldolase class II family. MtnB subfamily. The cofactor is Zn(2+).

The enzyme catalyses 5-(methylsulfanyl)-D-ribulose 1-phosphate = 5-methylsulfanyl-2,3-dioxopentyl phosphate + H2O. The protein operates within amino-acid biosynthesis; L-methionine biosynthesis via salvage pathway; L-methionine from S-methyl-5-thio-alpha-D-ribose 1-phosphate: step 2/6. Its function is as follows. Catalyzes the dehydration of methylthioribulose-1-phosphate (MTRu-1-P) into 2,3-diketo-5-methylthiopentyl-1-phosphate (DK-MTP-1-P). This is Methylthioribulose-1-phosphate dehydratase from Sodalis glossinidius (strain morsitans).